A 498-amino-acid chain; its full sequence is ATP synthase subunit beta, chloroplastic (498 aa).

172-179 (GGAGVGKT) is an ATP binding site.

It belongs to the ATPase alpha/beta chains family. In terms of assembly, F-type ATPases have 2 components, CF(1) - the catalytic core - and CF(0) - the membrane proton channel. CF(1) has five subunits: alpha(3), beta(3), gamma(1), delta(1), epsilon(1). CF(0) has four main subunits: a(1), b(1), b'(1) and c(9-12).

The protein localises to the plastid. It is found in the chloroplast thylakoid membrane. The enzyme catalyses ATP + H2O + 4 H(+)(in) = ADP + phosphate + 5 H(+)(out). In terms of biological role, produces ATP from ADP in the presence of a proton gradient across the membrane. The catalytic sites are hosted primarily by the beta subunits. This chain is ATP synthase subunit beta, chloroplastic, found in Nicotiana bigelovii (Bigelov's tobacco).